Consider the following 294-residue polypeptide: Store-operated calcium entry regulator STIMATE (294 aa).

The interval 1–22 (MQGPAGNASRGLPGGPPSTVAS) is disordered. At 1–28 (MQGPAGNASRGLPGGPPSTVASGAGRCE) the chain is on the cytoplasmic side. 3 helical membrane-spanning segments follow: residues 29 to 49 (SGAL…VVAF), 69 to 89 (IWFL…FANV), and 102 to 122 (LYLI…YVGV). The GXXXG motif motif lies at 149–153 (GAWVG). 2 consecutive transmembrane segments (helical) span residues 156 to 176 (ALYI…LLIL) and 194 to 214 (LAIV…WVVD). Residues 215–294 (NFLMRKGKTK…KKKHRFGLPV (80 aa)) are Cytoplasmic-facing. A disordered region spans residues 227–268 (LEERGANQDSRNGSKVRYRRAASHEESESEILISADDEMEES). The interval 241–246 (KVRYRR) is required for localization in the endoplasmic reticulum.

It belongs to the STIMATE family. Homooligomer. Interacts with STIM1. In terms of tissue distribution, widely expressed.

Its subcellular location is the endoplasmic reticulum membrane. Functionally, acts as a regulator of store-operated Ca(2+) entry (SOCE) at junctional sites that connect the endoplasmic reticulum (ER) and plasma membrane (PM), called ER-plasma membrane (ER-PM) junction or cortical ER. SOCE is a Ca(2+) influx following depletion of intracellular Ca(2+) stores. Acts by interacting with STIM1, promoting STIM1 conformational switch. Involved in STIM1 relocalization to ER-PM junctions. Contributes to the maintenance and reorganization of store-dependent ER-PM junctions. The chain is Store-operated calcium entry regulator STIMATE from Homo sapiens (Human).